Consider the following 89-residue polypeptide: Co-chaperonin GroES (89 aa).

It belongs to the GroES chaperonin family. As to quaternary structure, heptamer of 7 subunits arranged in a ring. Interacts with the chaperonin GroEL.

Its subcellular location is the cytoplasm. Together with the chaperonin GroEL, plays an essential role in assisting protein folding. The GroEL-GroES system forms a nano-cage that allows encapsulation of the non-native substrate proteins and provides a physical environment optimized to promote and accelerate protein folding. GroES binds to the apical surface of the GroEL ring, thereby capping the opening of the GroEL channel. This chain is Co-chaperonin GroES, found in Porphyromonas gingivalis (strain ATCC 33277 / DSM 20709 / CIP 103683 / JCM 12257 / NCTC 11834 / 2561).